We begin with the raw amino-acid sequence, 267 residues long: Thiamine thiazole synthase (267 aa).

Residues S41, 60 to 61 (ER), G68, V132, and 160 to 162 (HVD) each bind NAD(+). Residues D162 and H177 each coordinate Fe cation. Residue M227 coordinates NAD(+). R237 is a binding site for glycine.

It belongs to the THI4 family. As to quaternary structure, homooctamer; tetramer of dimers. The cofactor is Fe(2+).

The catalysed reaction is hydrogen sulfide + glycine + NAD(+) = ADP-5-ethyl-4-methylthiazole-2-carboxylate + nicotinamide + 3 H2O + H(+). Its pathway is cofactor biosynthesis; thiamine diphosphate biosynthesis. Its function is as follows. Involved in the biosynthesis of the thiazole moiety of thiamine. Catalyzes the conversion of NAD and glycine to adenosine diphosphate 5-(2-hydroxyethyl)-4-methylthiazole-2-carboxylate (ADT), an adenylated thiazole intermediate, using free sulfide as a source of sulfur. The polypeptide is Thiamine thiazole synthase (Saccharolobus solfataricus (strain ATCC 35092 / DSM 1617 / JCM 11322 / P2) (Sulfolobus solfataricus)).